Consider the following 318-residue polypeptide: Isoflavone reductase (318 aa).

NADP(+) is bound by residues 11–17 (GATGAIG), Arg-36, and Lys-44. Lys-144 (proton acceptor) is an active-site residue. Arg-148 provides a ligand contact to NADP(+).

It belongs to the NmrA-type oxidoreductase family. Isoflavone reductase subfamily.

The catalysed reaction is (3R)-vestitone + NADP(+) = 2'-hydroxyformononetin + NADPH + 2 H(+). It participates in phytoalexin biosynthesis; pterocarpan phytoalexin biosynthesis. Reduces achiral isoflavones to chiral isoflavanones during the biosynthesis of chiral pterocarpan phytoalexins. The reduction product (sophrol) is a third isomer, which represents the penultimate intermediate in the synthesis of the phytoalexin (+)-pisatin, the major phytoalexin in pea. This Pisum sativum (Garden pea) protein is Isoflavone reductase (IFR).